The following is a 329-amino-acid chain: Malate dehydrogenase (329 aa).

12-18 (GAAGQIG) is a binding site for NAD(+). Positions 95 and 101 each coordinate substrate. Residues Asn-108, Gln-115, and 132–134 (VGN) each bind NAD(+). Residues Asn-134 and Arg-165 each coordinate substrate. His-190 functions as the Proton acceptor in the catalytic mechanism.

Belongs to the LDH/MDH superfamily. MDH type 2 family.

The enzyme catalyses (S)-malate + NAD(+) = oxaloacetate + NADH + H(+). Its function is as follows. Catalyzes the reversible oxidation of malate to oxaloacetate. The sequence is that of Malate dehydrogenase from Polynucleobacter asymbioticus (strain DSM 18221 / CIP 109841 / QLW-P1DMWA-1) (Polynucleobacter necessarius subsp. asymbioticus).